A 496-amino-acid chain; its full sequence is Myotilin (496 aa).

The tract at residues 1-37 (MFNYERPKHFIQPQNPCGSRLQPPGPEVSGFPSQTKQ) is disordered. Arginine 20 is subject to Omega-N-methylarginine. Positions 78-149 (PNPGQKVTAT…PTPKTPDHEI (72 aa)) are necessary for interaction with ACTN1. Polar residues-rich tracts occupy residues 202–213 (NSDVQDSPQHNP) and 221–233 (PTSQ…SSRA). Positions 202 to 239 (NSDVQDSPQHNPEQARLHVPTSQVRSRSSSRAEANDQD) are disordered. Positions 213–491 (PEQARLHVPT…QRLAAQSGLY (279 aa)) are necessary for interaction with FLNC. Residues 213 to 496 (PEQARLHVPT…QSGLYESEEL (284 aa)) form a necessary for interaction with ACTA1 region. 2 consecutive Ig-like C2-type domains span residues 248–333 (PRFI…ATFT) and 347–439 (PMFI…LDVT).

Belongs to the myotilin/palladin family. Homodimer. Interacts with ACTA1, ACTN1, FLNA, FLNB, FLNC, and MYOZ2. Interacts with the C-terminal region of MYOZ1. As to expression, expressed in skeletal muscle (at protein level).

Its subcellular location is the cell membrane. It is found in the sarcolemma. The protein localises to the cytoplasm. The protein resides in the cytoskeleton. It localises to the myofibril. Its subcellular location is the sarcomere. It is found in the z line. Functionally, component of a complex of multiple actin cross-linking proteins. Involved in the control of myofibril assembly and stability at the Z lines in muscle cells. The protein is Myotilin (Myot) of Mus musculus (Mouse).